The primary structure comprises 244 residues: NAD(P)H-hydrate epimerase (244 aa).

Residues 35-240 enclose the YjeF N-terminal domain; sequence IREIDSLAME…SIGVPLELLR (206 aa). Residue 82 to 86 coordinates (6S)-NADPHX; that stretch reads NNGGD. Residues Asn83 and Asp150 each coordinate K(+). (6S)-NADPHX is bound by residues 154 to 160, Tyr165, and Asp183; that span reads GTGAKPP. Residue Thr186 coordinates K(+).

This sequence belongs to the NnrE/AIBP family. K(+) serves as cofactor.

It carries out the reaction (6R)-NADHX = (6S)-NADHX. The enzyme catalyses (6R)-NADPHX = (6S)-NADPHX. Its function is as follows. Catalyzes the epimerization of the S- and R-forms of NAD(P)HX, a damaged form of NAD(P)H that is a result of enzymatic or heat-dependent hydration. This is a prerequisite for the S-specific NAD(P)H-hydrate dehydratase to allow the repair of both epimers of NAD(P)HX. The sequence is that of NAD(P)H-hydrate epimerase from Rhodopirellula baltica (strain DSM 10527 / NCIMB 13988 / SH1).